The primary structure comprises 79 residues: Small ribosomal subunit protein bS18 (79 aa).

Belongs to the bacterial ribosomal protein bS18 family. As to quaternary structure, part of the 30S ribosomal subunit. Forms a tight heterodimer with protein bS6.

Functionally, binds as a heterodimer with protein bS6 to the central domain of the 16S rRNA, where it helps stabilize the platform of the 30S subunit. The chain is Small ribosomal subunit protein bS18 from Onion yellows phytoplasma (strain OY-M).